A 368-amino-acid polypeptide reads, in one-letter code: Quinolinate synthase (368 aa).

2 residues coordinate iminosuccinate: histidine 46 and serine 63. A [4Fe-4S] cluster-binding site is contributed by cysteine 110. Residues 141–143 and serine 162 contribute to the iminosuccinate site; that span reads YVN. Residue cysteine 230 participates in [4Fe-4S] cluster binding. Iminosuccinate contacts are provided by residues 256 to 258 and threonine 273; that span reads HPE. Cysteine 320 is a [4Fe-4S] cluster binding site.

It belongs to the quinolinate synthase family. Type 3 subfamily. Requires [4Fe-4S] cluster as cofactor.

It localises to the cytoplasm. The catalysed reaction is iminosuccinate + dihydroxyacetone phosphate = quinolinate + phosphate + 2 H2O + H(+). It participates in cofactor biosynthesis; NAD(+) biosynthesis; quinolinate from iminoaspartate: step 1/1. In terms of biological role, catalyzes the condensation of iminoaspartate with dihydroxyacetone phosphate to form quinolinate. The sequence is that of Quinolinate synthase from Bacillus cytotoxicus (strain DSM 22905 / CIP 110041 / 391-98 / NVH 391-98).